Here is a 210-residue protein sequence, read N- to C-terminus: ATP-dependent dethiobiotin synthetase BioD (210 aa).

13–18 serves as a coordination point for ATP; that stretch reads DVGKTV. Residue threonine 17 coordinates Mg(2+). Residue lysine 33 is part of the active site. Residues arginine 47 and glutamate 101 each contribute to the Mg(2+) site. Residues 101 to 104 and 185 to 187 contribute to the ATP site; these read EGAG and PPL.

Belongs to the dethiobiotin synthetase family. In terms of assembly, homodimer. The cofactor is Mg(2+).

It localises to the cytoplasm. It carries out the reaction (7R,8S)-7,8-diammoniononanoate + CO2 + ATP = (4R,5S)-dethiobiotin + ADP + phosphate + 3 H(+). Its pathway is cofactor biosynthesis; biotin biosynthesis; biotin from 7,8-diaminononanoate: step 1/2. In terms of biological role, catalyzes a mechanistically unusual reaction, the ATP-dependent insertion of CO2 between the N7 and N8 nitrogen atoms of 7,8-diaminopelargonic acid (DAPA, also called 7,8-diammoniononanoate) to form a ureido ring. The sequence is that of ATP-dependent dethiobiotin synthetase BioD from Afipia carboxidovorans (strain ATCC 49405 / DSM 1227 / KCTC 32145 / OM5) (Oligotropha carboxidovorans).